The chain runs to 106 residues: Large ribosomal subunit protein P2A (106 aa).

Lysine 2 is covalently cross-linked (Glycyl lysine isopeptide (Lys-Gly) (interchain with G-Cter in ubiquitin)). At threonine 16 the chain carries Phosphothreonine. Serine 40 and serine 43 each carry phosphoserine. Lysine 48 participates in a covalent cross-link: Glycyl lysine isopeptide (Lys-Gly) (interchain with G-Cter in ubiquitin). Residue serine 49 is modified to Phosphoserine. Low complexity predominate over residues 65–82 (PAAGPASAGGAAAASGDA). The tract at residues 65–106 (PAAGPASAGGAAAASGDAAAEEEKEEEAAEESDDDMGFGLFD) is disordered. A compositionally biased stretch (acidic residues) spans 83 to 100 (AAEEEKEEEAAEESDDDM). Position 96 is a phosphoserine (serine 96).

This sequence belongs to the eukaryotic ribosomal protein P1/P2 family. As to quaternary structure, component of the large ribosomal subunit (LSU). Mature yeast ribosomes consist of a small (40S) and a large (60S) subunit. The 40S small subunit contains 1 molecule of ribosomal RNA (18S rRNA) and 33 different proteins (encoded by 57 genes). The large 60S subunit contains 3 rRNA molecules (25S, 5.8S and 5S rRNA) and 46 different proteins (encoded by 81 genes). The 5 acidic ribosomal P-proteins form the stalk structure of the 60S subunit. They are organized as a pentameric complex in which uL10/P0 interacts with 2 heterodimers, P1A-P2B and P1B-P2A. Post-translationally, phosphorylation is not involved in the interaction of the acidic P proteins with the ribosome, however it is suggested to affect the ribosome activity and to participate in a possible ribosome regulatory mechanism. The N-terminus is not modified.

It localises to the cytoplasm. In terms of biological role, component of the ribosome, a large ribonucleoprotein complex responsible for the synthesis of proteins in the cell. The small ribosomal subunit (SSU) binds messenger RNAs (mRNAs) and translates the encoded message by selecting cognate aminoacyl-transfer RNA (tRNA) molecules. The large subunit (LSU) contains the ribosomal catalytic site termed the peptidyl transferase center (PTC), which catalyzes the formation of peptide bonds, thereby polymerizing the amino acids delivered by tRNAs into a polypeptide chain. The nascent polypeptides leave the ribosome through a tunnel in the LSU and interact with protein factors that function in enzymatic processing, targeting, and the membrane insertion of nascent chains at the exit of the ribosomal tunnel. In Saccharomyces cerevisiae (strain ATCC 204508 / S288c) (Baker's yeast), this protein is Large ribosomal subunit protein P2A.